The sequence spans 321 residues: Glutaminase (321 aa).

Substrate is bound by residues S69, N120, E165, N172, Y196, Y248, and V266.

Belongs to the glutaminase family. As to quaternary structure, homotetramer.

It catalyses the reaction L-glutamine + H2O = L-glutamate + NH4(+). The sequence is that of Glutaminase from Bacteroides fragilis (strain ATCC 25285 / DSM 2151 / CCUG 4856 / JCM 11019 / LMG 10263 / NCTC 9343 / Onslow / VPI 2553 / EN-2).